We begin with the raw amino-acid sequence, 214 residues long: Ribosomal RNA small subunit methyltransferase G (214 aa).

S-adenosyl-L-methionine is bound by residues Gly72, Phe77, 125–126 (VE), and Arg141.

Belongs to the methyltransferase superfamily. RNA methyltransferase RsmG family.

It is found in the cytoplasm. The enzyme catalyses guanosine(527) in 16S rRNA + S-adenosyl-L-methionine = N(7)-methylguanosine(527) in 16S rRNA + S-adenosyl-L-homocysteine. Specifically methylates the N7 position of guanine in position 527 of 16S rRNA. This Sinorhizobium fredii (strain NBRC 101917 / NGR234) protein is Ribosomal RNA small subunit methyltransferase G.